Reading from the N-terminus, the 460-residue chain is Zinc transporter 6 (460 aa).

At 1-33 (MGTIHLFRKSQRSLVGKLTHEFRLVAADRRSWK) the chain is on the cytoplasmic side. A helical membrane pass occupies residues 34 to 54 (ILLFGAINLICIGFLLMWCSS). At 55–64 (TNSIALTAYT) the chain is on the extracellular side. A helical membrane pass occupies residues 65 to 85 (YLTIFDLFSLITCLISYWVMV). At 86–98 (KKPSPVYSFGFER) the chain is on the cytoplasmic side. A helical transmembrane segment spans residues 99–119 (FEVLAVFASTVLAQLGALFIL). At 120–134 (KESAERFLEQPEIHT) the chain is on the extracellular side. The helical transmembrane segment at 135 to 155 (GRLLVGTFVALFFNLFTMLSV) threads the bilayer. Residues 156–200 (RNKPFAYVSEAASTSWLQEHVADLSRSICGIIPGLSSIFLPRMNP) lie on the Cytoplasmic side of the membrane. A helical membrane pass occupies residues 201 to 221 (FVLIDIAGALALCITYMLIEI). Residues 222–228 (NNYYAVD) are Extracellular-facing. A helical membrane pass occupies residues 229 to 249 (TASAIAIALMTFGTMYPMSVY). The Cytoplasmic segment spans residues 250-460 (SGKVLLQTTP…GTNTRGQSRP (211 aa)). The segment at 372–392 (PVTSTPAKPSSPPPEFSFNTP) is disordered.

It belongs to the cation diffusion facilitator (CDF) transporter (TC 2.A.4) family. SLC30A subfamily. In terms of assembly, heterodimer with SLC30A5; form a functional zinc ion transmembrane transporter.

Its subcellular location is the golgi apparatus. The protein localises to the trans-Golgi network membrane. Its function is as follows. Has probably no intrinsic transporter activity but together with SLC30A5 forms a functional zinc ion:proton antiporter heterodimer, mediating zinc entry into the lumen of organelles along the secretory pathway. As part of that zinc ion:proton antiporter, contributes to zinc ion homeostasis within the early secretory pathway and regulates the activation and folding of enzymes like alkaline phosphatases and enzymes involved in phosphatidylinositol glycan anchor biosynthesis. This chain is Zinc transporter 6 (SLC30A6), found in Gallus gallus (Chicken).